Here is a 366-residue protein sequence, read N- to C-terminus: MMQIFIAGAVAFLAAVLFTPVLIRKFSDEGLGQEIREEGPKSHLKKRGTPTMGGIAILVGITLGYIVAVLVGLVFTGSGPGVSGWLVLGLTLALGGVGFADDYIKLVKGRNLGLNARAKLICQLVIAIAFGVMILQFPDSNDITPGSTYLSFVREMPTFNIAVGGAVIGMILFLIFINIVISAWSNAVNLTDGLDGLASGVTAIVMGAYVLITFWQFRNSCADGAAAGCYFVRDPLDLAMLASAGLGACLGFLWWNASPAKIFMGDTGSLALGGLVAGLSITSHTELLMIIVGAIFVLETVSVVIQVTYFKTTGKRVFRMAPIHHHFENGGWAETTVVVRFWLLAALAAMTGFGLFYGEWLTATSF.

The next 10 membrane-spanning stretches (helical) occupy residues 3-23 (QIFI…PVLI), 55-75 (IAIL…GLVF), 80-100 (PGVS…VGFA), 118-138 (AKLI…LQFP), 161-181 (IAVG…NIVI), 197-217 (LASG…FWQF), 235-255 (PLDL…FLWW), 262-282 (IFMG…LSIT), 287-307 (LLMI…VIQV), and 341-361 (FWLL…GEWL).

The protein belongs to the glycosyltransferase 4 family. MraY subfamily. Mg(2+) is required as a cofactor.

Its subcellular location is the cell membrane. The catalysed reaction is UDP-N-acetyl-alpha-D-muramoyl-L-alanyl-gamma-D-glutamyl-meso-2,6-diaminopimeloyl-D-alanyl-D-alanine + di-trans,octa-cis-undecaprenyl phosphate = di-trans,octa-cis-undecaprenyl diphospho-N-acetyl-alpha-D-muramoyl-L-alanyl-D-glutamyl-meso-2,6-diaminopimeloyl-D-alanyl-D-alanine + UMP. It functions in the pathway cell wall biogenesis; peptidoglycan biosynthesis. Its function is as follows. Catalyzes the initial step of the lipid cycle reactions in the biosynthesis of the cell wall peptidoglycan: transfers peptidoglycan precursor phospho-MurNAc-pentapeptide from UDP-MurNAc-pentapeptide onto the lipid carrier undecaprenyl phosphate, yielding undecaprenyl-pyrophosphoryl-MurNAc-pentapeptide, known as lipid I. This is Phospho-N-acetylmuramoyl-pentapeptide-transferase from Corynebacterium urealyticum (strain ATCC 43042 / DSM 7109).